A 490-amino-acid chain; its full sequence is RNA-binding protein P (490 aa).

Residues 1-112 (MGKKRKLDSK…EEEEAAERDA (112 aa)) form a disordered region. Low complexity predominate over residues 13 to 36 (AAARSAAARAAAAAAAAAAAAAVA). Positions 74–108 (GGEEEEVEEVEVEEEVEVDEDEDGEGEGEEEEEAA) are enriched in acidic residues. 2 consecutive RRM domains span residues 156 to 233 (RKIF…LASV) and 267 to 343 (RKIF…QKAI).

In terms of assembly, forms homodimers. Interacts with RBP-L and RBP-208. Interacts with NSF.

The protein localises to the nucleus. Its subcellular location is the cytoplasm. Its function is as follows. RNA-binding protein that binds to a cis-localization element or zipcode, within the 5'-CDS of prolamine RNA. Binds strongly to glutelin mRNA, particularly to 3'-UTR and zipcode RNA. Recognizes and binds to glutelin zipcode RNA, which is required for proper mRNA localization to cisternal endoplasmic reticulum. Exhibits strong binding activity to a glutelin intron sequence and may participate in mRNA splicing. Required for the correct localization of glutelin and prolamine mRNA in endosperm cells during grain development. RBP-P and RBP-L form a quaternary complex with the membrane trafficking factors NSF and RAB5A. This quaternay complex carries glutelin mRNAs for active transport on endosomes to the cortical endoplasmic reticulum membrane, and enables endosome-mediated glutelin mRNA transport in endosperm cells. In Oryza sativa subsp. japonica (Rice), this protein is RNA-binding protein P.